A 210-amino-acid polypeptide reads, in one-letter code: V-type ATP synthase subunit D (210 aa).

The protein belongs to the V-ATPase D subunit family.

Produces ATP from ADP in the presence of a proton gradient across the membrane. The protein is V-type ATP synthase subunit D of Coprothermobacter proteolyticus (strain ATCC 35245 / DSM 5265 / OCM 4 / BT).